The sequence spans 475 residues: MSPQTETKTGFGFKAGVKDYRLNYYTPEYETKDTDILAAFRMTPQPGVPPEEAGAAVAAESSTGTWTTVWTDGLTSLDRYKGRCYDIEPVAGEENQYIAYVAYPLDLFEEGSVTNMFTSIVGNVFGFKALRALRLEDLRVPPAYSKTFQGPPHGIQAERDKLNKYGRPLLGCTIKPKLGLSAKNYGRAVYECLRGGLDFTKDDENVNSQPFMRWRDRFLFVAEALFKSQAETGEVKGHYLNATAGTCEEMMKRAIFARELGAPIVMHDYLTGGFTANTSLAHYCRDNGLLLHIHRAMHAVIDRQRNHGMHFRVLAKALRMSGGDHVHAGTVVGKLEGEREVTLGFVDSLRDDYIEKDRSRGIYFTQDWVSMPGVFPVASGGIHVWHMPALTEIFGDDSVLQFGGGTLGHPWGNAPGAVANRVASEACVQARNEGRDLAREGNEIIREASKWSPELAAACEVWKEIKFEFETIDTL.

Residues Met-1 to Ser-2 constitute a propeptide that is removed on maturation. The residue at position 3 (Pro-3) is an N-acetylproline. Lys-14 carries the post-translational modification N6,N6,N6-trimethyllysine. 2 residues coordinate substrate: Asn-123 and Thr-173. The active-site Proton acceptor is Lys-175. Position 177 (Lys-177) interacts with substrate. Lys-201, Asp-203, and Glu-204 together coordinate Mg(2+). Lys-201 is subject to N6-carboxylysine. The active-site Proton acceptor is the His-294. Arg-295, His-327, and Ser-379 together coordinate substrate.

Belongs to the RuBisCO large chain family. Type I subfamily. As to quaternary structure, heterohexadecamer of 8 large chains and 8 small chains; disulfide-linked. The disulfide link is formed within the large subunit homodimers. It depends on Mg(2+) as a cofactor. Post-translationally, the disulfide bond which can form in the large chain dimeric partners within the hexadecamer appears to be associated with oxidative stress and protein turnover.

The protein resides in the plastid. The protein localises to the chloroplast. It carries out the reaction 2 (2R)-3-phosphoglycerate + 2 H(+) = D-ribulose 1,5-bisphosphate + CO2 + H2O. The catalysed reaction is D-ribulose 1,5-bisphosphate + O2 = 2-phosphoglycolate + (2R)-3-phosphoglycerate + 2 H(+). Functionally, ruBisCO catalyzes two reactions: the carboxylation of D-ribulose 1,5-bisphosphate, the primary event in carbon dioxide fixation, as well as the oxidative fragmentation of the pentose substrate in the photorespiration process. Both reactions occur simultaneously and in competition at the same active site. The polypeptide is Ribulose bisphosphate carboxylase large chain (Angiopteris lygodiifolia (Turnip fern)).